A 299-amino-acid chain; its full sequence is Diaminopimelate epimerase (299 aa).

Residues Asn13, Gln46, and Asn66 each contribute to the substrate site. Cys75 acts as the Proton donor in catalysis. Substrate is bound by residues 76 to 77 (GN), Asn166, Asn199, and 217 to 218 (ER). Catalysis depends on Cys226, which acts as the Proton acceptor. 227–228 (GT) contacts substrate.

Belongs to the diaminopimelate epimerase family. Homodimer.

Its subcellular location is the cytoplasm. It carries out the reaction (2S,6S)-2,6-diaminopimelate = meso-2,6-diaminopimelate. It functions in the pathway amino-acid biosynthesis; L-lysine biosynthesis via DAP pathway; DL-2,6-diaminopimelate from LL-2,6-diaminopimelate: step 1/1. In terms of biological role, catalyzes the stereoinversion of LL-2,6-diaminopimelate (L,L-DAP) to meso-diaminopimelate (meso-DAP), a precursor of L-lysine and an essential component of the bacterial peptidoglycan. The chain is Diaminopimelate epimerase from Paraburkholderia phytofirmans (strain DSM 17436 / LMG 22146 / PsJN) (Burkholderia phytofirmans).